Here is a 291-residue protein sequence, read N- to C-terminus: uncharacterized protein (291 aa).

Disordered regions lie at residues S29–S50 and R168–K291. Position 50 is a phosphoserine (S50). Polar residues-rich tracts occupy residues N176–P186 and Q205–I217. The span at Y221–T237 shows a compositional bias: basic and acidic residues. The span at S280–K291 shows a compositional bias: polar residues.

This is an uncharacterized protein from Mus musculus (Mouse).